Consider the following 110-residue polypeptide: UPF0235 protein Mpop_2087 (110 aa).

This sequence belongs to the UPF0235 family.

This is UPF0235 protein Mpop_2087 from Methylorubrum populi (strain ATCC BAA-705 / NCIMB 13946 / BJ001) (Methylobacterium populi).